We begin with the raw amino-acid sequence, 442 residues long: Tyrosine-protein kinase transforming protein RYK (442 aa).

The Protein kinase domain occupies 45–316 (LSLGKVLGEG…QLKVHLEKLL (272 aa)). ATP contacts are provided by residues 51-59 (LGEGEFGSV) and K77. Catalysis depends on D181, which acts as the Proton acceptor. Residue Y212 is modified to Phosphotyrosine; by autocatalysis.

The protein belongs to the protein kinase superfamily. Tyr protein kinase family. AXL/UFO subfamily.

The protein resides in the host cell membrane. The catalysed reaction is L-tyrosyl-[protein] + ATP = O-phospho-L-tyrosyl-[protein] + ADP + H(+). The sequence is that of Tyrosine-protein kinase transforming protein RYK (V-RYK) from Avian retrovirus RPL30.